A 486-amino-acid polypeptide reads, in one-letter code: Cardiolipin synthase A (486 aa).

2 consecutive transmembrane segments (helical) span residues 3 to 23 (TFYTVVSWLIILGYWLLIAGV) and 38 to 58 (MAWLLVIYILPLVGIVAYLSV). 2 PLD phosphodiesterase domains span residues 219–246 (MDLRQHRKMIMIDNYIAYTGSMNMVDPR) and 399–426 (EGGLLHTKSVLVDGELSLVGTVNLDMRS). Residues histidine 224, lysine 226, aspartate 231, histidine 404, lysine 406, and aspartate 411 contribute to the active site.

This sequence belongs to the phospholipase D family. Cardiolipin synthase subfamily. ClsA sub-subfamily.

Its subcellular location is the cell inner membrane. It carries out the reaction 2 a 1,2-diacyl-sn-glycero-3-phospho-(1'-sn-glycerol) = a cardiolipin + glycerol. In terms of biological role, catalyzes the reversible phosphatidyl group transfer from one phosphatidylglycerol molecule to another to form cardiolipin (CL) (diphosphatidylglycerol) and glycerol. This is Cardiolipin synthase A from Cronobacter sakazakii (strain ATCC BAA-894) (Enterobacter sakazakii).